Here is a 249-residue protein sequence, read N- to C-terminus: ATP synthase subunit a, chloroplastic (249 aa).

5 helical membrane-spanning segments follow: residues 40–60 (QVLITSWVVIAILLGSAVLAV), 97–117 (VPFIGTLFLFIFVSNWSGALL), 136–156 (INTTVALALLTSVAYFYAGLS), 201–221 (LVVVVLVSLVPLVVPIPVMFL), and 222–242 (GLFTSGIQALIFATLAAAYIG).

The protein belongs to the ATPase A chain family. F-type ATPases have 2 components, CF(1) - the catalytic core - and CF(0) - the membrane proton channel. CF(1) has five subunits: alpha(3), beta(3), gamma(1), delta(1), epsilon(1). CF(0) has four main subunits: a, b, b' and c.

The protein localises to the plastid. It is found in the chloroplast thylakoid membrane. Functionally, key component of the proton channel; it plays a direct role in the translocation of protons across the membrane. This is ATP synthase subunit a, chloroplastic from Draba nemorosa (Woodland whitlowgrass).